The primary structure comprises 245 residues: DNA repair protein RecO (245 aa).

Belongs to the RecO family.

Involved in DNA repair and RecF pathway recombination. In Erwinia tasmaniensis (strain DSM 17950 / CFBP 7177 / CIP 109463 / NCPPB 4357 / Et1/99), this protein is DNA repair protein RecO.